The chain runs to 141 residues: Large ribosomal subunit protein uL11 (141 aa).

The protein belongs to the universal ribosomal protein uL11 family. Part of the ribosomal stalk of the 50S ribosomal subunit. Interacts with L10 and the large rRNA to form the base of the stalk. L10 forms an elongated spine to which L12 dimers bind in a sequential fashion forming a multimeric L10(L12)X complex. Post-translationally, one or more lysine residues are methylated.

Its function is as follows. Forms part of the ribosomal stalk which helps the ribosome interact with GTP-bound translation factors. In Prosthecochloris aestuarii (strain DSM 271 / SK 413), this protein is Large ribosomal subunit protein uL11.